The chain runs to 478 residues: DNA gyrase subunit B (478 aa).

Residues 319 to 438 form the Toprim domain; sequence CEIYLVEGDS…GGHVYIAQPP (120 aa). Mg(2+) is bound by residues E325, D403, and D405.

This sequence belongs to the type II topoisomerase GyrB family. In terms of assembly, heterotetramer, composed of two GyrA and two GyrB chains. In the heterotetramer, GyrA contains the active site tyrosine that forms a transient covalent intermediate with DNA, while GyrB binds cofactors and catalyzes ATP hydrolysis. It depends on Mg(2+) as a cofactor. Mn(2+) is required as a cofactor. Ca(2+) serves as cofactor.

It is found in the cytoplasm. It catalyses the reaction ATP-dependent breakage, passage and rejoining of double-stranded DNA.. Its function is as follows. A type II topoisomerase that negatively supercoils closed circular double-stranded (ds) DNA in an ATP-dependent manner to modulate DNA topology and maintain chromosomes in an underwound state. Negative supercoiling favors strand separation, and DNA replication, transcription, recombination and repair, all of which involve strand separation. Also able to catalyze the interconversion of other topological isomers of dsDNA rings, including catenanes and knotted rings. Type II topoisomerases break and join 2 DNA strands simultaneously in an ATP-dependent manner. The protein is DNA gyrase subunit B (gyrB) of Cytophaga aurantiaca.